We begin with the raw amino-acid sequence, 492 residues long: RNA helicase CrhR (492 aa).

The Q motif signature appears at 7 to 35 (STFADLGLSEKRCQLLADIGFEAPTQIQT). The region spanning 38 to 207 (IPLLLSGRDM…NQFLNDPALV (170 aa)) is the Helicase ATP-binding domain. 51–58 (SQTGTGKT) provides a ligand contact to ATP. The DEAD box signature appears at 155-158 (DEAD). The region spanning 234 to 379 (KALQPILEME…VCTIPNRSQV (146 aa)) is the Helicase C-terminal domain. The interval 451-492 (VLRRGRNAGGGQNKSGGGYQGKPGKPRRSSGGRRPAYSDRQQ) is disordered. The segment covering 457–471 (NAGGGQNKSGGGYQG) has biased composition (gly residues).

It belongs to the DEAD box helicase family.

Its subcellular location is the cytoplasm. It is found in the cell inner membrane. The protein localises to the cellular thylakoid membrane. It catalyses the reaction ATP + H2O = ADP + phosphate + H(+). With respect to regulation, helicase inhibited by the slowly-hydrolyzing ATP analog ATP-gamma-S. Protein is rapidly degraded upon shifting from 20 to 30 degrees Celsius, the degradation machinery is only transiently present in cells grown at 30 degrees Celsius, is inhibited by commercial protease inhibitors and requires full-length protein expression (the N-terminal fragment does not induce proteolysis although it can be degraded by wild-type extract). Functionally, an ATP-dependent bidirectional RNA helicase with RNA-dependent ATPase activity; does not unwind dsDNA, uses only (d)ATP. Also has ATP-dependent RNA annealing activity; concurrent annealing and helicase activity promote strand-exchange activity. In vitro has low helicase processivity, annealing processivity is probably higher. Required for correct cold adaptation, probably by aiding translation of mRNAs required for photosynthesis and electron transport. Probably regulates the cold-shock-inducible expression of the GroESL chaperones. May partially regulate its own expression at both the transcriptional and post-transcriptional level (experiments used a construct expressing a 25 kDa trunacted protein which might have dominant-negative effects); is probably not directly involved in the pathway responsible for mRNA degradation. In Synechocystis sp. (strain ATCC 27184 / PCC 6803 / Kazusa), this protein is RNA helicase CrhR.